The sequence spans 134 residues: Replication enhancer protein (134 aa).

The protein belongs to the geminiviridae replication enhancer protein family. Homooligomer. Interacts with the replication-associated protein (REP). Interacts with host proliferating cell nuclear antigen (PCNA). Interacts with host retinoblastoma-related protein 1 (RBR1), and may thereby deregulate the host cell cycle. Oligomerization and interaction with PCNA are necessary for optimal replication enhancement.

Increases viral DNA accumulation. Enhances infectivity and symptom expression. The chain is Replication enhancer protein from Squash leaf curl virus (SLCV).